The primary structure comprises 341 residues: Glucokinase (341 aa).

7–12 (GDIGGT) contacts ATP.

The protein belongs to the bacterial glucokinase family.

Its subcellular location is the cytoplasm. The catalysed reaction is D-glucose + ATP = D-glucose 6-phosphate + ADP + H(+). The chain is Glucokinase from Nostoc punctiforme (strain ATCC 29133 / PCC 73102).